The following is a 234-amino-acid chain: 1-(5-phosphoribosyl)-5-[(5-phosphoribosylamino)methylideneamino] imidazole-4-carboxamide isomerase (234 aa).

Asp-9 (proton acceptor) is an active-site residue. Asp-131 functions as the Proton donor in the catalytic mechanism.

It belongs to the HisA/HisF family.

The protein localises to the cytoplasm. It carries out the reaction 1-(5-phospho-beta-D-ribosyl)-5-[(5-phospho-beta-D-ribosylamino)methylideneamino]imidazole-4-carboxamide = 5-[(5-phospho-1-deoxy-D-ribulos-1-ylimino)methylamino]-1-(5-phospho-beta-D-ribosyl)imidazole-4-carboxamide. It participates in amino-acid biosynthesis; L-histidine biosynthesis; L-histidine from 5-phospho-alpha-D-ribose 1-diphosphate: step 4/9. This Staphylococcus carnosus (strain TM300) protein is 1-(5-phosphoribosyl)-5-[(5-phosphoribosylamino)methylideneamino] imidazole-4-carboxamide isomerase.